Consider the following 358-residue polypeptide: Spermatogenesis-associated protein 22 (358 aa).

4 stretches are compositionally biased toward polar residues: residues 1–12 (MKRNLNESSARS), 30–51 (QPLT…DSYG), 81–121 (PASA…TSLR), and 150–159 (QQQKQFQTPE). 3 disordered regions span residues 1-51 (MKRN…DSYG), 81-122 (PASA…SLRT), and 150-172 (QQQK…AEVP).

Component of a multiprotein complex with MEIOB and RPA2. Interacts with MEIOB. Interacts with the complex BRME1:HSF2BP:BRCA2. In terms of tissue distribution, specifically expressed in gonadal germ cells, when male and female germ cells progress through prophase of meiosis I.

The protein resides in the chromosome. Its function is as follows. Meiosis-specific protein required for homologous recombination in meiosis I. The sequence is that of Spermatogenesis-associated protein 22 from Mus musculus (Mouse).